Reading from the N-terminus, the 94-residue chain is Immune protein Tsi6 (94 aa).

Immunity protein that plays a role in preventing early activation of toxin Tse6. The sequence is that of Immune protein Tsi6 from Pseudomonas aeruginosa (strain ATCC 15692 / DSM 22644 / CIP 104116 / JCM 14847 / LMG 12228 / 1C / PRS 101 / PAO1).